Here is a 207-residue protein sequence, read N- to C-terminus: Small ribosomal subunit protein uS4 (207 aa).

The interval 31-55 is disordered; sequence KCKLDSKPGQHGRTSGARTSDYGTQ. A compositionally biased stretch (polar residues) spans 42 to 53; sequence GRTSGARTSDYG. The S4 RNA-binding domain maps to 97–157; sequence SRLDNVVYRM…EQKKKQARIL (61 aa).

This sequence belongs to the universal ribosomal protein uS4 family. Part of the 30S ribosomal subunit. Contacts protein S5. The interaction surface between S4 and S5 is involved in control of translational fidelity.

One of the primary rRNA binding proteins, it binds directly to 16S rRNA where it nucleates assembly of the body of the 30S subunit. Functionally, with S5 and S12 plays an important role in translational accuracy. In Paraburkholderia xenovorans (strain LB400), this protein is Small ribosomal subunit protein uS4.